Reading from the N-terminus, the 210-residue chain is MVRRTKEEAQETRAQIIEAAERAFYKRGVARTTLADIAELAGVTRGAIYWHFNNKAELVQALLDSLHETHDHLARASESEDEVDPLGCMRKLLLQVFNELVLDARTRRINEILHHKCEFTDDMCEIRQQRQSAVLDCHKGITLALANAVRRGQLPGELDAERAAVAMFAYVDGLIRRWLLLPDSVDLLGDVEKWVDTGLDMLRLSPALRK.

One can recognise an HTH tetR-type domain in the interval 10 to 70; it reads QETRAQIIEA…ALLDSLHETH (61 aa). Residues 33 to 52 constitute a DNA-binding region (H-T-H motif); the sequence is TLADIAELAGVTRGAIYWHF.

As to quaternary structure, homodimer.

Represses expression from the ttgABC operon promoter and its own expression. Binds to a promoter region between the divergently transcribed ttgR and ttgABC genes/operons; in the presence of chloramphenicol or tetracycline this binding no longer occurs and ttgR and ttgABC are derepressed. This suggests that TtgR binds these antibiotics. The sequence is that of HTH-type transcriptional regulator TtgR (ttgR) from Pseudomonas putida (strain DOT-T1E).